A 208-amino-acid polypeptide reads, in one-letter code: V-type proton ATPase subunit E (208 aa).

Belongs to the V-ATPase E subunit family.

Its function is as follows. Produces ATP from ADP in the presence of a proton gradient across the membrane. The chain is V-type proton ATPase subunit E from Chlamydia trachomatis serovar L2 (strain ATCC VR-902B / DSM 19102 / 434/Bu).